The chain runs to 992 residues: Sorting nexin-19 (992 aa).

The PXA domain occupies 95-272 (ERQLEREINR…VLVGIFSKAR (178 aa)). Residues 410–442 (ALEPKDGEASEGAEAEEGPGTETETGLPVSTLN) form a disordered region. Positions 418 to 428 (ASEGAEAEEGP) are enriched in acidic residues. Residues 533-663 (LRITGTITAR…EFLALNTDAR (131 aa)) enclose the PX domain. Positions 582 and 629 each coordinate a 1,2-diacyl-sn-glycero-3-phospho-(1D-myo-inositol-3-phosphate). Disordered regions lie at residues 692-726 (FPRSEPQSPTEELSEAETESKPQTEGKKASKSRLR), 778-797 (QPTKAPEKDPEQPPKGRVDS), and 973-992 (AATTSASDTPGNSKRMGVSS). 2 stretches are compositionally biased toward basic and acidic residues: residues 709-719 (TESKPQTEGKK) and 782-795 (APEKDPEQPPKGRV). Polar residues predominate over residues 980 to 992 (DTPGNSKRMGVSS).

Belongs to the sorting nexin family. As to quaternary structure, interacts with PTPRN.

The protein resides in the early endosome membrane. It localises to the cytoplasmic vesicle membrane. In terms of biological role, plays a role in intracellular vesicle trafficking and exocytosis. May play a role in maintaining insulin-containing dense core vesicles in pancreatic beta-cells and in preventing their degradation. May play a role in insulin secretion. Interacts with membranes containing phosphatidylinositol 3-phosphate (PtdIns(3P)). The sequence is that of Sorting nexin-19 (SNX19) from Homo sapiens (Human).